A 359-amino-acid chain; its full sequence is Protein mab-21-like 2-A (359 aa).

The protein belongs to the mab-21 family.

The protein localises to the nucleus. Its subcellular location is the cytoplasm. In terms of biological role, required for normal development of the eye. May promote dorsalization of the developing embryo by antagonizing the ventralizing factor bmp4. Functional antagonism of bmp4 may require interaction with smad1. Required for gastrulation and subsequent neural development. May function as a transcriptional repressor. The sequence is that of Protein mab-21-like 2-A (mab21l2-a) from Xenopus laevis (African clawed frog).